A 240-amino-acid chain; its full sequence is tRNA (guanine-N(7)-)-methyltransferase (240 aa).

The interval 1–20 is disordered; it reads MTESHDTPITSDGEARPHRR. 4 residues coordinate S-adenosyl-L-methionine: Glu-70, Glu-95, Asp-122, and Asp-145. Asp-145 is a catalytic residue. Residues Lys-149, Asp-181, and 218–221 contribute to the substrate site; that span reads TKFE.

Belongs to the class I-like SAM-binding methyltransferase superfamily. TrmB family.

It catalyses the reaction guanosine(46) in tRNA + S-adenosyl-L-methionine = N(7)-methylguanosine(46) in tRNA + S-adenosyl-L-homocysteine. Its pathway is tRNA modification; N(7)-methylguanine-tRNA biosynthesis. In terms of biological role, catalyzes the formation of N(7)-methylguanine at position 46 (m7G46) in tRNA. The sequence is that of tRNA (guanine-N(7)-)-methyltransferase from Pseudomonas putida (strain ATCC 700007 / DSM 6899 / JCM 31910 / BCRC 17059 / LMG 24140 / F1).